A 167-amino-acid chain; its full sequence is MSVTLHTNLGDIKIELFCESVPRTAENFLALCASGQYDGTLFHRNIRGFMIQGGDPTGTGKGGQSIWGRPFSDEIRQTLRFNNRGMVAMANAGPDTNKSQFFITYAKQPSLDGKYSIFGKVIDGMETLDSMEKTPVNPKSRPLQEIKLLNVTVHANPIADQAKGGLA.

Positions 1 to 153 (MSVTLHTNLG…QEIKLLNVTV (153 aa)) constitute a PPIase cyclophilin-type domain.

The protein belongs to the cyclophilin-type PPIase family. PPIL3 subfamily.

It carries out the reaction [protein]-peptidylproline (omega=180) = [protein]-peptidylproline (omega=0). Its function is as follows. PPIases accelerate the folding of proteins. It catalyzes the cis-trans isomerization of proline imidic peptide bonds in oligopeptides. The sequence is that of Peptidyl-prolyl cis-trans isomerase-like 3 (CYP10) from Cryptococcus neoformans var. neoformans serotype D (strain B-3501A) (Filobasidiella neoformans).